The following is a 180-amino-acid chain: Adenine phosphoribosyltransferase (180 aa).

This sequence belongs to the purine/pyrimidine phosphoribosyltransferase family. In terms of assembly, homodimer.

The protein localises to the cytoplasm. The catalysed reaction is AMP + diphosphate = 5-phospho-alpha-D-ribose 1-diphosphate + adenine. It functions in the pathway purine metabolism; AMP biosynthesis via salvage pathway; AMP from adenine: step 1/1. Functionally, catalyzes a salvage reaction resulting in the formation of AMP, that is energically less costly than de novo synthesis. This is Adenine phosphoribosyltransferase from Actinobacillus succinogenes (strain ATCC 55618 / DSM 22257 / CCUG 43843 / 130Z).